The following is a 227-amino-acid chain: Isopentenyl-diphosphate delta-isomerase 2 (227 aa).

Lys-36 contacts substrate. The Mg(2+) site is built by His-40 and His-51. Residues 49 to 199 (LLHRAFSVVL…EVKVTPWLRT (151 aa)) enclose the Nudix hydrolase domain. Substrate-binding residues include Arg-70 and Lys-74. Ser-86 is a catalytic residue. Ser-87 provides a ligand contact to substrate. Mg(2+)-binding residues include Glu-146 and Glu-148. Glu-148 is an active-site residue. The Microbody targeting signal motif lies at 225-227 (HRV).

The protein belongs to the IPP isomerase type 1 family. Mg(2+) is required as a cofactor. In terms of tissue distribution, muscle-specific expression.

It is found in the peroxisome. The catalysed reaction is isopentenyl diphosphate = dimethylallyl diphosphate. It functions in the pathway isoprenoid biosynthesis; dimethylallyl diphosphate biosynthesis; dimethylallyl diphosphate from isopentenyl diphosphate: step 1/1. Its function is as follows. Catalyzes the 1,3-allylic rearrangement of the homoallylic substrate isopentenyl (IPP) to its highly electrophilic allylic isomer, dimethylallyl diphosphate (DMAPP). This Homo sapiens (Human) protein is Isopentenyl-diphosphate delta-isomerase 2 (IDI2).